The sequence spans 221 residues: Phosphate-specific transport system accessory protein PhoU homolog 1 (221 aa).

The protein belongs to the PhoU family. Homodimer.

It is found in the cytoplasm. Functionally, plays a role in the regulation of phosphate uptake. In this role, it may bind, possibly as a chaperone, to PhoR, PhoP or a PhoR-PhoP complex to promote dephosphorylation of phospho-PhoP, or inhibit formation of the PhoR-PhoP transitory complex. In Mycobacterium bovis (strain ATCC BAA-935 / AF2122/97), this protein is Phosphate-specific transport system accessory protein PhoU homolog 1 (phoU1).